A 98-amino-acid polypeptide reads, in one-letter code: MTMVYANIFLAFTTSLMGLLMYRSHLMSSLLCLEGMMLSLFVMMTVTILNNHFTLASMAPIILLVFAACEAALGLSLLVMVSNTYGTDYVQNLNLLQC.

Transmembrane regions (helical) follow at residues 1–21, 29–49, and 61–81; these read MTMV…GLLM, SLLC…VTIL, and IILL…LVMV.

It belongs to the complex I subunit 4L family. As to quaternary structure, core subunit of respiratory chain NADH dehydrogenase (Complex I) which is composed of 45 different subunits.

It is found in the mitochondrion inner membrane. The catalysed reaction is a ubiquinone + NADH + 5 H(+)(in) = a ubiquinol + NAD(+) + 4 H(+)(out). Core subunit of the mitochondrial membrane respiratory chain NADH dehydrogenase (Complex I) which catalyzes electron transfer from NADH through the respiratory chain, using ubiquinone as an electron acceptor. Part of the enzyme membrane arm which is embedded in the lipid bilayer and involved in proton translocation. The polypeptide is NADH-ubiquinone oxidoreductase chain 4L (MT-ND4L) (Neomonachus schauinslandi (Hawaiian monk seal)).